A 227-amino-acid chain; its full sequence is MAYPFQLGFQDATSPIMEELLHFHDHALMIVFLISSLVLYLISVMLTTSLTHTSTMDAQEVETIWTILPAMILIMIALPSLRILYMMDEINNPYLTVKTMGHQWYWSYEYTDYEDMSFDSYMVPTQDLKPGELRLLEVDNRVVLPMELTIRMLISSEDVLHSWAVPSLGLKTDAIPGRLNQTTLLSTRPGLYYGQCSEICGSNHSFMPIVLELVPLKYFEKWSSSML.

At 1-14 the chain is on the mitochondrial intermembrane side; that stretch reads MAYPFQLGFQDATS. A helical transmembrane segment spans residues 15–45; the sequence is PIMEELLHFHDHALMIVFLISSLVLYLISVM. At 46–59 the chain is on the mitochondrial matrix side; sequence LTTSLTHTSTMDAQ. The chain crosses the membrane as a helical span at residues 60–87; it reads EVETIWTILPAMILIMIALPSLRILYMM. Topologically, residues 88-227 are mitochondrial intermembrane; the sequence is DEINNPYLTV…YFEKWSSSML (140 aa). 6 residues coordinate Cu cation: His-161, Cys-196, Glu-198, Cys-200, His-204, and Met-207. Residue Glu-198 coordinates Mg(2+). Tyr-218 bears the Phosphotyrosine mark.

Belongs to the cytochrome c oxidase subunit 2 family. As to quaternary structure, component of the cytochrome c oxidase (complex IV, CIV), a multisubunit enzyme composed of 14 subunits. The complex is composed of a catalytic core of 3 subunits MT-CO1, MT-CO2 and MT-CO3, encoded in the mitochondrial DNA, and 11 supernumerary subunits COX4I, COX5A, COX5B, COX6A, COX6B, COX6C, COX7A, COX7B, COX7C, COX8 and NDUFA4, which are encoded in the nuclear genome. The complex exists as a monomer or a dimer and forms supercomplexes (SCs) in the inner mitochondrial membrane with NADH-ubiquinone oxidoreductase (complex I, CI) and ubiquinol-cytochrome c oxidoreductase (cytochrome b-c1 complex, complex III, CIII), resulting in different assemblies (supercomplex SCI(1)III(2)IV(1) and megacomplex MCI(2)III(2)IV(2)). Found in a complex with TMEM177, COA6, COX18, COX20, SCO1 and SCO2. Interacts with TMEM177 in a COX20-dependent manner. Interacts with COX20. Interacts with COX16. Cu cation is required as a cofactor.

The protein resides in the mitochondrion inner membrane. The catalysed reaction is 4 Fe(II)-[cytochrome c] + O2 + 8 H(+)(in) = 4 Fe(III)-[cytochrome c] + 2 H2O + 4 H(+)(out). Its function is as follows. Component of the cytochrome c oxidase, the last enzyme in the mitochondrial electron transport chain which drives oxidative phosphorylation. The respiratory chain contains 3 multisubunit complexes succinate dehydrogenase (complex II, CII), ubiquinol-cytochrome c oxidoreductase (cytochrome b-c1 complex, complex III, CIII) and cytochrome c oxidase (complex IV, CIV), that cooperate to transfer electrons derived from NADH and succinate to molecular oxygen, creating an electrochemical gradient over the inner membrane that drives transmembrane transport and the ATP synthase. Cytochrome c oxidase is the component of the respiratory chain that catalyzes the reduction of oxygen to water. Electrons originating from reduced cytochrome c in the intermembrane space (IMS) are transferred via the dinuclear copper A center (CU(A)) of subunit 2 and heme A of subunit 1 to the active site in subunit 1, a binuclear center (BNC) formed by heme A3 and copper B (CU(B)). The BNC reduces molecular oxygen to 2 water molecules using 4 electrons from cytochrome c in the IMS and 4 protons from the mitochondrial matrix. In Rousettus leschenaultii (Leschenault's rousette), this protein is Cytochrome c oxidase subunit 2 (MT-CO2).